Consider the following 293-residue polypeptide: Protease HtpX (293 aa).

The next 2 helical transmembrane spans lie at 4–24 (IALFLITNLAVMLVFGLVLSL) and 34–54 (GLMIMAGLFGFGGAFVSLLMS). Residue H139 coordinates Zn(2+). Residue E140 is part of the active site. H143 serves as a coordination point for Zn(2+). The next 2 helical transmembrane spans lie at 158–178 (IVNTFVIFISRLIAQVVSGFL) and 193–213 (MVYFAVATVLELVFGILASII). E222 serves as a coordination point for Zn(2+).

This sequence belongs to the peptidase M48B family. Zn(2+) is required as a cofactor.

It localises to the cell inner membrane. The polypeptide is Protease HtpX (Pectobacterium atrosepticum (strain SCRI 1043 / ATCC BAA-672) (Erwinia carotovora subsp. atroseptica)).